Here is a 329-residue protein sequence, read N- to C-terminus: Biotin synthase (329 aa).

The 231-residue stretch at 48-278 folds into the Radical SAM core domain; the sequence is FLGNGVDLCS…TKKIAVCGGR (231 aa). Cysteine 66, cysteine 70, and cysteine 73 together coordinate [4Fe-4S] cluster. [2Fe-2S] cluster is bound by residues serine 143 and cysteine 203.

The protein belongs to the radical SAM superfamily. Biotin synthase family. Homodimer. [4Fe-4S] cluster is required as a cofactor. [2Fe-2S] cluster serves as cofactor.

The enzyme catalyses (4R,5S)-dethiobiotin + (sulfur carrier)-SH + 2 reduced [2Fe-2S]-[ferredoxin] + 2 S-adenosyl-L-methionine = (sulfur carrier)-H + biotin + 2 5'-deoxyadenosine + 2 L-methionine + 2 oxidized [2Fe-2S]-[ferredoxin]. It functions in the pathway cofactor biosynthesis; biotin biosynthesis; biotin from 7,8-diaminononanoate: step 2/2. Catalyzes the conversion of dethiobiotin (DTB) to biotin by the insertion of a sulfur atom into dethiobiotin via a radical-based mechanism. This Geobacter metallireducens (strain ATCC 53774 / DSM 7210 / GS-15) protein is Biotin synthase.